Consider the following 840-residue polypeptide: Probable inorganic carbon transporter subunit DabA (840 aa).

Cys355, Asp357, His539, and Cys554 together coordinate Zn(2+).

Belongs to the inorganic carbon transporter (TC 9.A.2) DabA family. Forms a complex with DabB. Zn(2+) serves as cofactor.

It is found in the cell membrane. Part of an energy-coupled inorganic carbon pump. This is Probable inorganic carbon transporter subunit DabA from Roseiflexus castenholzii (strain DSM 13941 / HLO8).